Reading from the N-terminus, the 159-residue chain is SsrA-binding protein (159 aa).

This sequence belongs to the SmpB family.

The protein localises to the cytoplasm. Functionally, required for rescue of stalled ribosomes mediated by trans-translation. Binds to transfer-messenger RNA (tmRNA), required for stable association of tmRNA with ribosomes. tmRNA and SmpB together mimic tRNA shape, replacing the anticodon stem-loop with SmpB. tmRNA is encoded by the ssrA gene; the 2 termini fold to resemble tRNA(Ala) and it encodes a 'tag peptide', a short internal open reading frame. During trans-translation Ala-aminoacylated tmRNA acts like a tRNA, entering the A-site of stalled ribosomes, displacing the stalled mRNA. The ribosome then switches to translate the ORF on the tmRNA; the nascent peptide is terminated with the 'tag peptide' encoded by the tmRNA and targeted for degradation. The ribosome is freed to recommence translation, which seems to be the essential function of trans-translation. This is SsrA-binding protein from Idiomarina loihiensis (strain ATCC BAA-735 / DSM 15497 / L2-TR).